A 192-amino-acid polypeptide reads, in one-letter code: Large ribosomal subunit protein uL10 (192 aa).

This sequence belongs to the universal ribosomal protein uL10 family. In terms of assembly, part of the ribosomal stalk of the 50S ribosomal subunit. The N-terminus interacts with L11 and the large rRNA to form the base of the stalk. The C-terminus forms an elongated spine to which L12 dimers bind in a sequential fashion forming a multimeric L10(L12)X complex.

Functionally, forms part of the ribosomal stalk, playing a central role in the interaction of the ribosome with GTP-bound translation factors. The polypeptide is Large ribosomal subunit protein uL10 (Gloeobacter violaceus (strain ATCC 29082 / PCC 7421)).